The following is a 406-amino-acid chain: S-adenosylmethionine synthase (406 aa).

His-17 contacts ATP. Residue Asp-19 participates in Mg(2+) binding. Glu-45 lines the K(+) pocket. Glu-58 and Gln-101 together coordinate L-methionine. The segment at Gln-101–Arg-111 is flexible loop. ATP contacts are provided by residues Asp-178–Lys-180, Asp-258, Arg-264–Lys-265, Ala-281, and Lys-285. An L-methionine-binding site is contributed by Asp-258. Lys-289 serves as a coordination point for L-methionine.

Belongs to the AdoMet synthase family. As to quaternary structure, homotetramer; dimer of dimers. Requires Mg(2+) as cofactor. The cofactor is K(+).

Its subcellular location is the cytoplasm. The catalysed reaction is L-methionine + ATP + H2O = S-adenosyl-L-methionine + phosphate + diphosphate. The protein operates within amino-acid biosynthesis; S-adenosyl-L-methionine biosynthesis; S-adenosyl-L-methionine from L-methionine: step 1/1. Its function is as follows. Catalyzes the formation of S-adenosylmethionine (AdoMet) from methionine and ATP. The overall synthetic reaction is composed of two sequential steps, AdoMet formation and the subsequent tripolyphosphate hydrolysis which occurs prior to release of AdoMet from the enzyme. The chain is S-adenosylmethionine synthase from Bifidobacterium longum subsp. infantis (strain ATCC 15697 / DSM 20088 / JCM 1222 / NCTC 11817 / S12).